A 54-amino-acid chain; its full sequence is Apelin receptor early endogenous ligand (54 aa).

Positions 1–22 are cleaved as a signal peptide; that stretch reads MRFQQFLFAFFIFIMSLLLISG. A glycan (N-linked (GlcNAc...) asparagine) is linked at Asn27.

This sequence belongs to the Elabela/Toddler family. In terms of assembly, interacts with APLNR. As to expression, expressed in the intima of blood vessels. Expressed in endothelial cells in blood vessels in the heart and lung. Expressed in cytotrophoblasts and syncytiotrophoblasts of first-trimester placental tissue and term placentas (at protein level). Not detected in smooth muscle cells or cardiomyocytes (at protein level). Expressed in kidney. Expressed in blood vessels. Expressed in embryonic (ESCs) and induced (iPSCs) pluripotent stem cells. Most highly expressed in undifferentiated embryonic stem cell and is rapidly down-regulated during differentiation.

The protein resides in the secreted. It is found in the extracellular space. Functionally, peptide hormone that functions as endogenous ligand for the G-protein-coupled apelin receptor (APLNR/APJ), that plays a role in the regulation of normal cardiovascular function and fluid homeostasis. Functions as a balanced agonist activating both G(i) protein pathway and beta-arrestin pathway of APLNR. Downstream G proteins activation, apelin can inhibit cAMP production and activate key intracellular effectors such as ERKs. On the other hand, APLNR activation induces beta-arrestin recruitment to the membrane leading to desensitization and internalization of the receptor. Required for mesendodermal differentiation, blood vessels formation and heart morphogenesis during early development and for adult cardiovascular homeostasis. Acts as a motogen by promoting mesendodermal cell migration during gastrulation by binding and activating APLNR. Acts as an early embryonic regulator of cellular movement with a role in migration and development of cardiac progenitor cells. May act as a chemoattractant for the activation of angioblast migration toward the embryonic midline, i.e. the position of the future vessel formation, during vasculogenesis. Positively regulates sinus venosus (SV)-derived endothelial cells migration into the developing heart to promote coronary blood vessel sprouting. Plays a role in placental vascular development; promotes placental trophoblast invasion and spiral artery remodeling in the uterus. Involved in the regulation of maternal cardiovascular homeostasis to prevent gestational hypertension and for potent cardioprotective functions during heart failure. Mediates myocardial contractility in an ERK1/2-dependent manner. The sequence is that of Apelin receptor early endogenous ligand from Homo sapiens (Human).